A 509-amino-acid polypeptide reads, in one-letter code: ATP synthase subunit alpha (509 aa).

169-176 (GDRQTGKT) contacts ATP.

This sequence belongs to the ATPase alpha/beta chains family. As to quaternary structure, F-type ATPases have 2 components, CF(1) - the catalytic core - and CF(0) - the membrane proton channel. CF(1) has five subunits: alpha(3), beta(3), gamma(1), delta(1), epsilon(1). CF(0) has four main subunits: a(1), b(1), b'(1) and c(9-12).

The protein localises to the cell inner membrane. The catalysed reaction is ATP + H2O + 4 H(+)(in) = ADP + phosphate + 5 H(+)(out). Its function is as follows. Produces ATP from ADP in the presence of a proton gradient across the membrane. The alpha chain is a regulatory subunit. This chain is ATP synthase subunit alpha, found in Bradyrhizobium sp. (strain BTAi1 / ATCC BAA-1182).